The primary structure comprises 597 residues: NADH-quinone oxidoreductase subunits H/I (597 aa).

The tract at residues 1-405 (MPDLSLFGHD…FPTPPVPADA (405 aa)) is NADH-quinone oxidoreductase subunit H. 9 helical membrane passes run 12 to 32 (FWLV…IPLV), 82 to 102 (PIYL…FAVI), 124 to 144 (VGVL…VLAG), 170 to 190 (MALC…SGIV), 195 to 215 (PTWF…SMVG), 260 to 280 (ALAT…NLIP), 286 to 306 (WWGL…FVWL), 318 to 338 (FMRL…MLVA), and 351 to 371 (ATGA…GLFL). An NADH-quinone oxidoreductase subunit I region spans residues 406–597 (HRVDNPKGGL…APAGAKGGAR (192 aa)). 2 4Fe-4S ferredoxin-type domains span residues 455–485 (LNRH…VEGA) and 501–530 (RVYQ…MTND). Residues Cys465, Cys468, Cys471, Cys475, Cys510, Cys513, Cys516, and Cys520 each coordinate [4Fe-4S] cluster.

It in the N-terminal section; belongs to the complex I subunit 1 family. The protein in the C-terminal section; belongs to the complex I 23 kDa subunit family. NDH-1 is composed of 13 different subunits. Subunits NuoA, H/I, J, K, L, M, N constitute the membrane sector of the complex. [4Fe-4S] cluster is required as a cofactor.

The protein resides in the cell membrane. The catalysed reaction is a quinone + NADH + 5 H(+)(in) = a quinol + NAD(+) + 4 H(+)(out). Functionally, NDH-1 shuttles electrons from NADH, via FMN and iron-sulfur (Fe-S) centers, to quinones in the respiratory chain. The immediate electron acceptor for the enzyme in this species is believed to be ubiquinone. Couples the redox reaction to proton translocation (for every two electrons transferred, four hydrogen ions are translocated across the cytoplasmic membrane), and thus conserves the redox energy in a proton gradient. This subunit may bind ubiquinone. The protein is NADH-quinone oxidoreductase subunits H/I (nuoH/I) of Nocardia farcinica (strain IFM 10152).